We begin with the raw amino-acid sequence, 231 residues long: NADH-ubiquinone oxidoreductase chain 4 (231 aa).

Transmembrane regions (helical) follow at residues 1–21 (PIAGSMVLAAILLKLGGYGII), 34–54 (MFLPLVVLALWGAVLANLTCL), 63–85 (IAYSSISHMGLVAAAIIIQTPWG), 89–111 (GMTLMIAHGFTSSALFCLANTTY), 118–138 (ILILTRGFHNILPMATTWWLL), and 156–176 (LLIMSALFNWCPTTIIMLGLS).

The protein belongs to the complex I subunit 4 family.

The protein resides in the mitochondrion membrane. It carries out the reaction a ubiquinone + NADH + 5 H(+)(in) = a ubiquinol + NAD(+) + 4 H(+)(out). Functionally, core subunit of the mitochondrial membrane respiratory chain NADH dehydrogenase (Complex I) that is believed to belong to the minimal assembly required for catalysis. Complex I functions in the transfer of electrons from NADH to the respiratory chain. The immediate electron acceptor for the enzyme is believed to be ubiquinone. In Calloselasma rhodostoma (Malayan pit viper), this protein is NADH-ubiquinone oxidoreductase chain 4 (MT-ND4).